A 221-amino-acid chain; its full sequence is MVLALNYNMHGVNIRSENAAKPHTMPSRYLCEYIRSIEKNGHALDFGCGKLRYSDELISKFDEVTFLDSKRQLEREQIIRGIKTKIIDYVPRYYKNANTVAFEDVDKIIGGYDFILCSNVLSAVPCRDTIDKIVLSIKRLLKSGGETLIVNQYKSSYFKKYETGRKHLYGYIYKNSKSVSYYGLLDELAVQEICSSHGLEILKSWSKAGSSYVTVGSCNAI.

This is an uncharacterized protein from Escherichia coli (strain K12).